The following is a 97-amino-acid chain: UPF0223 protein lp_2149 (97 aa).

Belongs to the UPF0223 family.

In Lactiplantibacillus plantarum (strain ATCC BAA-793 / NCIMB 8826 / WCFS1) (Lactobacillus plantarum), this protein is UPF0223 protein lp_2149.